An 88-amino-acid polypeptide reads, in one-letter code: Small ribosomal subunit protein bS16c (88 aa).

The protein belongs to the bacterial ribosomal protein bS16 family.

The protein localises to the plastid. The protein resides in the chloroplast. This is Small ribosomal subunit protein bS16c from Lactuca sativa (Garden lettuce).